The sequence spans 400 residues: MRYDVLARAGFARRGNLHLPHSIVETPVFMPVGTQGTMKGIVPEQLVSMDCRILLCNTYHLGHRPGHERVKAAGGLHKMMNWNRSILTDSGGFQMVSLSKLMTVDENGVNFESPHTGEMMALPPEKSIEIQQALGADIMMQLDHVIHVLTTGDIVKEAMHRSIRWLDRCKVAHTRDDQAMFPILQGGLNLELRKECAKEMAKRAKVGIAIGGLSGGEEKDHFWRVVAACCAALPPHLPRYVMGVGFPVDLVICSFLGADMFDCVYPTRTARFGTAMVRRGGLMQLNQKRYKEDFLPIDKKCECNTCKNYTRAYIHSIVGKETVGCHLVSVHNIKHQLDLMRDVRQAIQSNSVEQFLKQFLYDYYGPIQSENPSKQDSEKMREVPQWVRDAVDHMGYKLDF.

D89 (proton acceptor) is an active-site residue. Substrate is bound by residues 89 to 93, D143, Q185, and G212; that span reads DSGGF. The tract at residues 243-249 is RNA binding; that stretch reads GVGFPVD. D262 acts as the Nucleophile in catalysis. The RNA binding; important for wobble base 34 recognition stretch occupies residues 267-271; sequence TRTAR. Residues C301, C303, C306, and H331 each contribute to the Zn(2+) site.

This sequence belongs to the queuine tRNA-ribosyltransferase family. In terms of assembly, heterodimer of a catalytic subunit and an accessory subunit. It depends on Zn(2+) as a cofactor.

It is found in the cytoplasm. The enzyme catalyses guanosine(34) in tRNA + queuine = queuosine(34) in tRNA + guanine. Its function is as follows. Catalytic subunit of the queuine tRNA-ribosyltransferase (TGT) that catalyzes the base-exchange of a guanine (G) residue with queuine (Q) at position 34 (anticodon wobble position) in tRNAs with GU(N) anticodons (tRNA-Asp, -Asn, -His and -Tyr), resulting in the hypermodified nucleoside queuosine (7-(((4,5-cis-dihydroxy-2-cyclopenten-1-yl)amino)methyl)-7-deazaguanosine). Catalysis occurs through a double-displacement mechanism. The nucleophile active site attacks the C1' of nucleotide 34 to detach the guanine base from the RNA, forming a covalent enzyme-RNA intermediate. The proton acceptor active site deprotonates the incoming queuine, allowing a nucleophilic attack on the C1' of the ribose to form the product. This chain is Queuine tRNA-ribosyltransferase catalytic subunit, found in Caenorhabditis elegans.